Reading from the N-terminus, the 387-residue chain is MMELESETQELHLHVNGEPEGKFSTEERSHKYSWRLRVSLYVTLLLAGETIATLLGRLYYEKGGKSTWLETLVQLVGFPLTLPCYYYLKPEPSKTKTITKKTTSSFLTLSLVYIGLGLLVAGHCILYSFGLLYLPVSTFSLISASQLAFNAVFSYFLNSQKITPFILNSLVLLTISSTLLVIQHEPESPSSTSKSAAKSKYVIGYICAVGSSAGYSLVLSLTDYAFEKILKKYTFKAILDMATYPSMVATCVVVVGLFGSGGWKKLSTEMEEFQLGKSSYILINIGSTISWQACLIGSVGLIIEVSSLFSNVISTLCLPVVPVLAVVFFRDEMSGIKLVAMFLAIWGFVSYGYQHYVNDRKPEEDQELPQSKEEEEQKQVDTIHVQA.

Positions Met1–Ser24 are disordered. Positions Gln9–Ser24 are enriched in basic and acidic residues. The next 10 membrane-spanning stretches (helical) occupy residues Leu36–Gly56, Trp68–Leu88, Phe106–Leu126, Phe129–Phe149, Ile162–Ile182, Tyr201–Leu221, Ile238–Phe258, Ile283–Ile303, Phe309–Phe329, and Met333–Tyr353. The interval Pro362 to Ala387 is disordered. Over residues Gln370 to Asp381 the composition is skewed to basic and acidic residues.

Belongs to the purine permeases (TC 2.A.7.14) family.

It localises to the membrane. In Arabidopsis thaliana (Mouse-ear cress), this protein is Probable purine permease 6 (PUP6).